We begin with the raw amino-acid sequence, 299 residues long: 33 kDa chaperonin (299 aa).

2 cysteine pairs are disulfide-bonded: C240/C242 and C273/C276.

Belongs to the HSP33 family. In terms of processing, under oxidizing conditions two disulfide bonds are formed involving the reactive cysteines. Under reducing conditions zinc is bound to the reactive cysteines and the protein is inactive.

The protein resides in the cytoplasm. Redox regulated molecular chaperone. Protects both thermally unfolding and oxidatively damaged proteins from irreversible aggregation. Plays an important role in the bacterial defense system toward oxidative stress. In Gloeothece citriformis (strain PCC 7424) (Cyanothece sp. (strain PCC 7424)), this protein is 33 kDa chaperonin.